A 164-amino-acid chain; its full sequence is Putative pre-16S rRNA nuclease (164 aa).

The protein belongs to the YqgF nuclease family.

The protein localises to the cytoplasm. Its function is as follows. Could be a nuclease involved in processing of the 5'-end of pre-16S rRNA. This chain is Putative pre-16S rRNA nuclease, found in Synechococcus sp. (strain CC9902).